Here is a 2798-residue protein sequence, read N- to C-terminus: Nipped-B-like protein (2798 aa).

2 stretches are compositionally biased toward polar residues: residues 128–173 (LSQN…QNSP) and 191–208 (HPSSYTTHPQMQQASVSS). The disordered stretch occupies residues 128-338 (LSQNSMHSSP…IKLGKDEKDQ (211 aa)). 2 positions are modified to phosphoserine: Ser-150 and Ser-162. Positions 234-249 (HHADNPRHGSSDDYLH) are enriched in basic and acidic residues. Phosphoserine is present on residues Ser-243, Ser-256, Ser-274, Ser-280, Ser-284, Ser-301, Ser-306, Ser-318, and Ser-350. The span at 482–500 (RESAIERERFSKEVQDKDK) shows a compositional bias: basic and acidic residues. The disordered stretch occupies residues 482–940 (RESAIERERF…NKAEFPSYLL (459 aa)). The segment covering 523–534 (PASQETGSTGNG) has biased composition (polar residues). Basic and acidic residues-rich tracts occupy residues 562–572 (DSIKKPEETKQ), 593–625 (PENHPETPKKKSDPELSKSEMKQNESRLSESKP), 634–663 (KSNESKLETKTETPTEELKQNENKTTESKQ), 672–685 (KQNENRPCDTKPND), and 694–899 (ENTK…DTNK). Thr-713 and Thr-746 each carry phosphothreonine. The residue at position 906 (Ser-906) is a Phosphoserine. Positions 908 to 933 (NSKDDKRTEGNRSKVDSNKAHTDNKA) are enriched in basic and acidic residues. The PxVxL motif signature appears at 990–1003 (NKGAKPVVVLQKLS). Disordered regions lie at residues 1011-1041 (IKDREEKSRSSLKSIKNKPSKSNKGSIDQSV) and 1054-1186 (ESTM…TPEE). Lys-1076 bears the N6-acetyllysine mark. Residues Ser-1083, Ser-1084, and Ser-1090 each carry the phosphoserine modification. Residues 1083–1094 (SSDEDNDSDEAF) are compositionally biased toward acidic residues. Residues 1103–1133 (KDDDKAWEYEERDRRSSGDHRRSGHSHDGRR) are compositionally biased toward basic and acidic residues. Phosphoserine occurs at positions 1144, 1146, and 1148. At Tyr-1153 the chain carries Phosphotyrosine. At Ser-1154 the chain carries Phosphoserine. Positions 1165–1176 (KMKKKEKQKKRK) are enriched in basic residues. Thr-1183 carries the phosphothreonine modification. The residue at position 1191 (Ser-1191) is a Phosphoserine. The segment covering 1685–1705 (AMKSQKDEESSDATHHAKELE) has biased composition (basic and acidic residues). A disordered region spans residues 1685-1706 (AMKSQKDEESSDATHHAKELET). 5 HEAT repeats span residues 1761 to 1799 (AQSFDIYLTQILRVLGENAIAVRTKAMKCLSEVVAVDPS), 1837 to 1875 (PQLAEQYYDMLIERILDTGISVRKRVIKILRDICIEQPT), 1939 to 1978 (YDWFEQLLQNLLKSEEDSSYKPVKKACTQLVDNLVEHILK), 2221 to 2261 (VNLK…LKEM), and 2307 to 2345 (LIHPVQCVPYLIAMGTDPEPAMRNKADQQLVEIDKKYAG). Over residues 2467 to 2483 (VKDKRKERKTSPAKENE) the composition is skewed to basic and acidic residues. 2 disordered regions span residues 2467-2514 (VKDK…DDIN) and 2645-2690 (TSLL…DSTE). 7 positions are modified to phosphoserine: Ser-2487, Ser-2503, Ser-2505, Ser-2507, Ser-2509, Ser-2646, and Ser-2652. Positions 2504 to 2513 (ESDSDSEDDI) are enriched in acidic residues. The residue at position 2661 (Thr-2661) is a Phosphothreonine. Phosphoserine is present on Ser-2666.

The protein belongs to the SCC2/Nipped-B family. As to quaternary structure, heterodimerizes with MAU2/SCC4 to form the cohesin loading complex. The NIPBL-MAU2 heterodimer interacts with the cohesin complex composed of SMC1A/B and SMC3 heterodimer, RAD21 and STAG1/SA1. NIPBL directly contacts all members of the complex, RAD21, SMC1A/B, SMC3 and STAG1. Interacts directly (via PxVxL motif) with CBX3 and CBX5. Interacts with ZNF609 (via N-terminus). Interacts with the multiprotein complex Integrator. Interacts with BRD4. As to expression, spermatocytes and oocytes (at protein level).

The protein resides in the nucleus. It is found in the chromosome. Functionally, plays an important role in the loading of the cohesin complex on to DNA. Forms a heterodimeric complex (also known as cohesin loading complex) with MAU2/SCC4 which mediates the loading of the cohesin complex onto chromatin. Plays a role in cohesin loading at sites of DNA damage. Its recruitment to double-strand breaks (DSBs) sites occurs in a CBX3-, RNF8- and RNF168-dependent manner whereas its recruitment to UV irradiation-induced DNA damage sites occurs in a ATM-, ATR-, RNF8- and RNF168-dependent manner. Along with ZNF609, promotes cortical neuron migration during brain development by regulating the transcription of crucial genes in this process. Preferentially binds promoters containing paused RNA polymerase II. Up-regulates the expression of SEMA3A, NRP1, PLXND1 and GABBR2 genes, among others. This chain is Nipped-B-like protein (Nipbl), found in Mus musculus (Mouse).